Here is a 98-residue protein sequence, read N- to C-terminus: Integration host factor subunit beta (98 aa).

This sequence belongs to the bacterial histone-like protein family. Heterodimer of an alpha and a beta chain.

Its function is as follows. This protein is one of the two subunits of integration host factor, a specific DNA-binding protein that functions in genetic recombination as well as in transcriptional and translational control. The protein is Integration host factor subunit beta of Teredinibacter turnerae (strain ATCC 39867 / T7901).